A 458-amino-acid chain; its full sequence is Phosphoglucosamine mutase (458 aa).

The Phosphoserine intermediate role is filled by Ser108. Positions 108, 247, 249, and 251 each coordinate Mg(2+). A Phosphoserine modification is found at Ser108.

It belongs to the phosphohexose mutase family. Requires Mg(2+) as cofactor. Post-translationally, activated by phosphorylation.

It carries out the reaction alpha-D-glucosamine 1-phosphate = D-glucosamine 6-phosphate. Functionally, catalyzes the conversion of glucosamine-6-phosphate to glucosamine-1-phosphate. The sequence is that of Phosphoglucosamine mutase from Thiobacillus denitrificans (strain ATCC 25259 / T1).